The sequence spans 309 residues: tRNA-cytidine(32) 2-sulfurtransferase (309 aa).

The short motif at 47–52 is the PP-loop motif element; the sequence is SGGKDS. Residues C122, C125, and C213 each coordinate [4Fe-4S] cluster.

Belongs to the TtcA family. In terms of assembly, homodimer. Mg(2+) is required as a cofactor. It depends on [4Fe-4S] cluster as a cofactor.

The protein resides in the cytoplasm. It carries out the reaction cytidine(32) in tRNA + S-sulfanyl-L-cysteinyl-[cysteine desulfurase] + AH2 + ATP = 2-thiocytidine(32) in tRNA + L-cysteinyl-[cysteine desulfurase] + A + AMP + diphosphate + H(+). Its pathway is tRNA modification. In terms of biological role, catalyzes the ATP-dependent 2-thiolation of cytidine in position 32 of tRNA, to form 2-thiocytidine (s(2)C32). The sulfur atoms are provided by the cysteine/cysteine desulfurase (IscS) system. This chain is tRNA-cytidine(32) 2-sulfurtransferase, found in Erwinia tasmaniensis (strain DSM 17950 / CFBP 7177 / CIP 109463 / NCPPB 4357 / Et1/99).